A 266-amino-acid chain; its full sequence is Enoyl-CoA hydratase EchA19 (266 aa).

Residue Glu120 is part of the active site. Lys135 carries the post-translational modification N6-succinyllysine. Residue Glu140 is part of the active site. N6-succinyllysine is present on Lys142.

The protein belongs to the enoyl-CoA hydratase/isomerase family. In terms of assembly, homotrimer; substrate probably binds in elongated tunnels between the subunits. Succinylated in vitro at pH 8.1, succinylation reduces specific activity of the enzyme 5.5-fold; succinyl-CoA is a downstream by-product of cholesterol degradation. Can be de-succinylated in vitro by NAD-dependent protein deacylase (AC P9WGG3). Succinylation may be a negative feedback regulator of cholesterol metabolism.

The enzyme catalyses (22E)-3-oxochola-4,22-dien-24-oyl-CoA + H2O = (22R)-hydroxy-3-oxo-chol-4-ene-24-oyl-CoA. It participates in steroid metabolism; cholesterol degradation. Its function is as follows. Degradation of the cholesterol side chain involves 3 multistep beta-oxidation cycles, this may be involved in the second cycle. Hydrates 3-OCDO-CoA ((22E)-3-oxo-chol-4,22-dien-24-oyl-CoA) to make (22R)-HOCO-CoA (3-oxo-chol-4-ene-(22R)-hydroxy-24-oyl-CoA). Also acts on octenoyl-CoA. Not active on (E)-3-OCDS-CoA ((E)-3-oxocholest-4,24-dien-26-oyl-CoA) or 3-OPDC-CoA (3-oxo-4,17-pregnadiene-20-carboxyl-CoA). Hydrates the same substrate as ChsH3, but the 2 enzymes make different stereoisomers of the product. In Mycobacterium tuberculosis (strain ATCC 25618 / H37Rv), this protein is Enoyl-CoA hydratase EchA19.